The following is a 213-amino-acid chain: MRSNYIVIEGLEGAGKTTARQLVVETLQSAGIHDMVFTREPGGTVLAEKLRSLVLDIQSTGDEVINDKAEVLMFYAARVQLVETVIKPALARGQWVIGDRHDLSTQAYQGGGRGIDRTMLATLRDAVLGDFRPNLTLYLDVTPEVGLQRARARGELDRIEQESMNFFNRTRARYLELAAADPSIRTVDATQPLDAVARDIRATIAQWMAEQPA.

Residue 10–17 (GLEGAGKT) coordinates ATP.

It belongs to the thymidylate kinase family.

It carries out the reaction dTMP + ATP = dTDP + ADP. Functionally, phosphorylation of dTMP to form dTDP in both de novo and salvage pathways of dTTP synthesis. In Klebsiella pneumoniae (strain 342), this protein is Thymidylate kinase.